We begin with the raw amino-acid sequence, 108 residues long: Circadian clock oscillator protein KaiB (108 aa).

The protein belongs to the KaiB family. Homodimer, interacts with KaiC. The KaiABC complex composition changes during the circadian cycle to control KaiC phosphorylation. Complexes KaiC(6), KaiA(2-4):KaiC(6), KaiB(6):KaiC(6) and KaiC(6):KaiB(6):KaiA(12) are among the most important forms, many form cooperatively. Undergoes a major conformational rearrangment; in the free state forms homotetramers as a dimer of dimers. When bound to the CI domain of KaiC switches to a monomeric thioredoxin-fold (KaiB(fs)). KaiB(fs) binds CikA, leading it to dephosphorylate phospho-RpaA.

Key component of the KaiABC oscillator complex, which constitutes the main circadian regulator in cyanobacteria. Complex composition changes during the circadian cycle to control KaiC phosphorylation. KaiA stimulates KaiC autophosphorylation, while KaiB sequesters KaiA, leading to KaiC autodephosphorylation. Phospho-Ser-431 KaiC accumulation triggers binding of KaiB to form the KaiB(6):KaiC(6) complex, leading to changes in output regulators CikA and SasA. KaiB switches to a thioredoxin-like fold (KaiB(fs)) when bound to KaiC. KaiB(6):KaiC(6) formation exposes a site for KaiA binding that sequesters KaiA from KaiC, making the KaiC(6):KaiB(6):KaiA(12) complex that results in KaiC autodephosphorylation. Functionally, a metamorphic protein which reversibly switches between an inactive tetrameric fold and a rare, thioredoxin-like monomeric fold (KaiB(fs)). KaiB(fs) binds phospho-KaiC, KaiA and CikA. KaiA and CikA compete for binding to KaiB(fs), and KaiB(fs) and SasA compete for binding to KaiC, thus the clock oscillator and output signal pathway are tightly coupled. The polypeptide is Circadian clock oscillator protein KaiB (Nostoc sp. (strain PCC 7120 / SAG 25.82 / UTEX 2576)).